A 314-amino-acid polypeptide reads, in one-letter code: Lipoyl synthase (314 aa).

Positions 1–24 (MMDTPIIRHPEKVRRPDNPSPRKP) are disordered. The [4Fe-4S] cluster site is built by Cys-53, Cys-58, Cys-64, Cys-79, Cys-83, Cys-86, and Ser-293. The Radical SAM core domain maps to 65-282 (WKRRHATFMI…ADIARGKGFL (218 aa)). Positions 294-308 (HHADRDFEDLRKARQ) are enriched in basic and acidic residues. Residues 294–314 (HHADRDFEDLRKARQDAAATK) form a disordered region.

Belongs to the radical SAM superfamily. Lipoyl synthase family. It depends on [4Fe-4S] cluster as a cofactor.

Its subcellular location is the cytoplasm. It carries out the reaction [[Fe-S] cluster scaffold protein carrying a second [4Fe-4S](2+) cluster] + N(6)-octanoyl-L-lysyl-[protein] + 2 oxidized [2Fe-2S]-[ferredoxin] + 2 S-adenosyl-L-methionine + 4 H(+) = [[Fe-S] cluster scaffold protein] + N(6)-[(R)-dihydrolipoyl]-L-lysyl-[protein] + 4 Fe(3+) + 2 hydrogen sulfide + 2 5'-deoxyadenosine + 2 L-methionine + 2 reduced [2Fe-2S]-[ferredoxin]. The protein operates within protein modification; protein lipoylation via endogenous pathway; protein N(6)-(lipoyl)lysine from octanoyl-[acyl-carrier-protein]: step 2/2. Functionally, catalyzes the radical-mediated insertion of two sulfur atoms into the C-6 and C-8 positions of the octanoyl moiety bound to the lipoyl domains of lipoate-dependent enzymes, thereby converting the octanoylated domains into lipoylated derivatives. The chain is Lipoyl synthase from Rhodospirillum rubrum (strain ATCC 11170 / ATH 1.1.1 / DSM 467 / LMG 4362 / NCIMB 8255 / S1).